A 405-amino-acid chain; its full sequence is Argininosuccinate synthase (405 aa).

12–20 (AYSGGLDTS) is a binding site for ATP. Y90 and S95 together coordinate L-citrulline. G120 serves as a coordination point for ATP. Residues T122, N126, and D127 each coordinate L-aspartate. N126 contributes to the L-citrulline binding site. L-citrulline-binding residues include R130, S179, S188, E265, and Y277.

This sequence belongs to the argininosuccinate synthase family. Type 1 subfamily. As to quaternary structure, homotetramer.

The protein localises to the cytoplasm. The enzyme catalyses L-citrulline + L-aspartate + ATP = 2-(N(omega)-L-arginino)succinate + AMP + diphosphate + H(+). Its pathway is amino-acid biosynthesis; L-arginine biosynthesis; L-arginine from L-ornithine and carbamoyl phosphate: step 2/3. In Clostridium perfringens (strain 13 / Type A), this protein is Argininosuccinate synthase.